We begin with the raw amino-acid sequence, 240 residues long: Uridylate kinase (240 aa).

Position 13-16 (13-16) interacts with ATP; sequence KFSG. Glycine 55 contacts UMP. 2 residues coordinate ATP: glycine 56 and arginine 60. UMP-binding positions include aspartate 76 and 137-144; that span reads TGNPFFTT. Positions 164, 170, and 173 each coordinate ATP.

The protein belongs to the UMP kinase family. Homohexamer.

The protein resides in the cytoplasm. The catalysed reaction is UMP + ATP = UDP + ADP. Its pathway is pyrimidine metabolism; CTP biosynthesis via de novo pathway; UDP from UMP (UMPK route): step 1/1. Its activity is regulated as follows. Inhibited by UTP. In terms of biological role, catalyzes the reversible phosphorylation of UMP to UDP. This Helicobacter acinonychis (strain Sheeba) protein is Uridylate kinase.